Here is a 137-residue protein sequence, read N- to C-terminus: Nucleoside diphosphate kinase (137 aa).

Positions 9, 57, 85, 91, 102, and 112 each coordinate ATP. Residue His115 is the Pros-phosphohistidine intermediate of the active site.

This sequence belongs to the NDK family. In terms of assembly, homotetramer. Mg(2+) is required as a cofactor.

The protein localises to the cytoplasm. The catalysed reaction is a 2'-deoxyribonucleoside 5'-diphosphate + ATP = a 2'-deoxyribonucleoside 5'-triphosphate + ADP. The enzyme catalyses a ribonucleoside 5'-diphosphate + ATP = a ribonucleoside 5'-triphosphate + ADP. Its function is as follows. Major role in the synthesis of nucleoside triphosphates other than ATP. The ATP gamma phosphate is transferred to the NDP beta phosphate via a ping-pong mechanism, using a phosphorylated active-site intermediate. The sequence is that of Nucleoside diphosphate kinase from Helicobacter hepaticus (strain ATCC 51449 / 3B1).